We begin with the raw amino-acid sequence, 291 residues long: Transmembrane O-methyltransferase (291 aa).

A helical transmembrane segment spans residues 31–51; sequence VGTMSPAIALAFLPLVVTLLV. S-adenosyl-L-methionine-binding positions include Glu-137, 139-140, Ser-145, Glu-163, and Ser-193; that span reads GT.

It belongs to the class I-like SAM-binding methyltransferase superfamily. Cation-dependent O-methyltransferase family. In terms of assembly, interacts with LHFPL5, PCDH15, TMC1, TMC2 and TMIE. Interacts directly with TMC1. The interaction of TOMT with TMC1 and TMC2 is required for the transportation of TMC1/2 into the stereocilia of hair cells.

Its subcellular location is the membrane. It localises to the cytoplasm. The protein localises to the endoplasmic reticulum. It carries out the reaction a catechol + S-adenosyl-L-methionine = a guaiacol + S-adenosyl-L-homocysteine + H(+). Catalyzes the O-methylation, and thereby the inactivation, of catecholamine neurotransmitters and catechol hormones. Required for auditory function. Component of the cochlear hair cell's mechanotransduction (MET) machinery. Involved in the assembly of the asymmetric tip-link MET complex. Required for transportation of TMC1 and TMC2 proteins into the mechanically sensitive stereocilia of the hair cells. The function in MET is independent of the enzymatic activity. The polypeptide is Transmembrane O-methyltransferase (Homo sapiens (Human)).